The sequence spans 319 residues: tRNA-cytidine(32) 2-sulfurtransferase (319 aa).

The PP-loop motif signature appears at 43–48; the sequence is SGGKDS. [4Fe-4S] cluster is bound by residues Cys118, Cys121, and Cys209.

This sequence belongs to the TtcA family. In terms of assembly, homodimer. Requires Mg(2+) as cofactor. [4Fe-4S] cluster serves as cofactor.

Its subcellular location is the cytoplasm. The enzyme catalyses cytidine(32) in tRNA + S-sulfanyl-L-cysteinyl-[cysteine desulfurase] + AH2 + ATP = 2-thiocytidine(32) in tRNA + L-cysteinyl-[cysteine desulfurase] + A + AMP + diphosphate + H(+). It functions in the pathway tRNA modification. Catalyzes the ATP-dependent 2-thiolation of cytidine in position 32 of tRNA, to form 2-thiocytidine (s(2)C32). The sulfur atoms are provided by the cysteine/cysteine desulfurase (IscS) system. In Neisseria gonorrhoeae (strain NCCP11945), this protein is tRNA-cytidine(32) 2-sulfurtransferase.